The chain runs to 446 residues: Maltoporin (446 aa).

The signal sequence occupies residues 1–25 (MMITLRKLPLAVAVAAGVMSAQAMA).

Belongs to the porin LamB (TC 1.B.3) family. In terms of assembly, homotrimer formed of three 18-stranded antiparallel beta-barrels, containing three independent channels.

The protein resides in the cell outer membrane. It carries out the reaction beta-maltose(in) = beta-maltose(out). Its function is as follows. Involved in the transport of maltose and maltodextrins. The protein is Maltoporin of Escherichia coli (strain K12 / MC4100 / BW2952).